The chain runs to 324 residues: Probable UDP-sugar transporter protein SLC35A4 (324 aa).

Topologically, residues 1 to 18 are cytoplasmic; that stretch reads MSVEDGGMPGLSRPRQAR. The helical transmembrane segment at 19-39 threads the bilayer; it reads WTLMLLLSTAMYGAHAPLLAL. Residues 40–52 are Lumenal-facing; that stretch reads CHVDGRVPFRPSS. The helical transmembrane segment at 53 to 73 threads the bilayer; sequence AVLLTELTKLLLCAFSLLVGW. Residues 74 to 85 are Cytoplasmic-facing; sequence QAWPQGAPPWRQ. A helical membrane pass occupies residues 86–106; it reads AAPFALSALLYGANNNLVIYL. The Lumenal portion of the chain corresponds to 107 to 142; it reads QRYMDPSTYQVLSNLKIGSTAVLYCLCLRHRLSVRQ. The chain crosses the membrane as a helical span at residues 143–163; the sequence is GLALLLLMAAGACYAAGGLQV. Over 164-180 the chain is Cytoplasmic; the sequence is PGNTLPRPPPAAAASPM. A helical transmembrane segment spans residues 181–201; that stretch reads PLHITPLGLLLLILYCLISGL. Residues 202 to 214 lie on the Lumenal side of the membrane; sequence SSVYTELLMKRQQ. The chain crosses the membrane as a helical span at residues 215–235; the sequence is LPLALQNLFLYTFGVLLNLGL. Residues 236–250 are Cytoplasmic-facing; that stretch reads HAGGGPGPGLLEGFS. A helical membrane pass occupies residues 251 to 271; that stretch reads GWAALVVLSQALNGLLMSVVM. The Lumenal portion of the chain corresponds to 272–275; the sequence is KHGS. Residues 276–298 form a helical membrane-spanning segment; it reads SITRLFVVSCSLVVNAVLSAVLL. Topologically, residues 299 to 324 are cytoplasmic; it reads RLQLTAAFFLATLLIGLAMRLYYGSR.

This sequence belongs to the nucleotide-sugar transporter family. SLC35A subfamily. Found in a complex with SLC35A2 and SLC35A3.

It is found in the golgi apparatus membrane. The enzyme catalyses CDP-L-ribitol(in) + CDP(out) = CDP-L-ribitol(out) + CDP(in). In terms of biological role, mediates the transport of CDP-ribitol. Does not exhibit CMP-sialic acid, UDP-galactose and UDP-N-acetylglucosamine transport activity. This Pongo abelii (Sumatran orangutan) protein is Probable UDP-sugar transporter protein SLC35A4.